A 308-amino-acid chain; its full sequence is 50 kDa gamma-zein (308 aa).

The first 19 residues, 1-19 (MKLVLVVLAFIALVSSVSC), serve as a signal peptide directing secretion. Residues 27–159 (CGQQQSHEQQ…QPQQPQQYQQ (133 aa)) form a disordered region. The segment covering 55–119 (HHQQQQHQQQ…QHHQQSQGHV (65 aa)) has biased composition (low complexity). Over residues 120-129 (QQHEQSHEQH) the composition is skewed to basic and acidic residues. Residues 130–159 (QGQSHEQQHQQQFQGHDKQQQPQQPQQYQQ) are compositionally biased toward low complexity. Cys286 carries GPI-anchor amidated cysteine lipidation. Positions 287 to 308 (GLYHSYYQNNPCSSNDISGVCN) are cleaved as a propeptide — removed in mature form.

Belongs to the gliadin/glutenin family. Interacts with OP10 (via N-terminus).

The protein localises to the cell membrane. Its function is as follows. Zeins are major seed storage proteins. The polypeptide is 50 kDa gamma-zein (Zea mays (Maize)).